Reading from the N-terminus, the 201-residue chain is Probable nicotinate-nucleotide adenylyltransferase (201 aa).

The tract at residues 182–201 (GPESSQSATSIRERGGWSLR) is disordered. Residues 192–201 (IRERGGWSLR) are compositionally biased toward basic and acidic residues.

This sequence belongs to the NadD family.

It catalyses the reaction nicotinate beta-D-ribonucleotide + ATP + H(+) = deamido-NAD(+) + diphosphate. The protein operates within cofactor biosynthesis; NAD(+) biosynthesis; deamido-NAD(+) from nicotinate D-ribonucleotide: step 1/1. Its function is as follows. Catalyzes the reversible adenylation of nicotinate mononucleotide (NaMN) to nicotinic acid adenine dinucleotide (NaAD). In Parvibaculum lavamentivorans (strain DS-1 / DSM 13023 / NCIMB 13966), this protein is Probable nicotinate-nucleotide adenylyltransferase.